The sequence spans 795 residues: Phenylalanine--tRNA ligase beta subunit (795 aa).

In terms of domain architecture, tRNA-binding spans 39-148 (AGSFHGVVVG…ADAPIGTDIR (110 aa)). The region spanning 401 to 476 (PKRATITLRR…RVYGYNNIPD (76 aa)) is the B5 domain. Residues Asp-454, Asp-460, Glu-463, and Glu-464 each contribute to the Mg(2+) site. An FDX-ACB domain is found at 701-794 (SRFPANRRDI…LKERFQASLR (94 aa)).

This sequence belongs to the phenylalanyl-tRNA synthetase beta subunit family. Type 1 subfamily. As to quaternary structure, tetramer of two alpha and two beta subunits. Requires Mg(2+) as cofactor.

The protein localises to the cytoplasm. It catalyses the reaction tRNA(Phe) + L-phenylalanine + ATP = L-phenylalanyl-tRNA(Phe) + AMP + diphosphate + H(+). The sequence is that of Phenylalanine--tRNA ligase beta subunit from Shigella flexneri.